We begin with the raw amino-acid sequence, 146 residues long: Ribosome maturation factor RimP (146 aa).

This sequence belongs to the RimP family.

The protein localises to the cytoplasm. Required for maturation of 30S ribosomal subunits. The sequence is that of Ribosome maturation factor RimP from Dechloromonas aromatica (strain RCB).